We begin with the raw amino-acid sequence, 530 residues long: Sugar transport protein MST6 (530 aa).

Residues 1-18 lie on the Cytoplasmic side of the membrane; that stretch reads MAGGVVVNNGGGKDYPGK. The helical transmembrane segment at 19-39 threads the bilayer; that stretch reads LTMFVLFACIVAATGGLIFGY. The Extracellular segment spans residues 40 to 81; it reads DIGISGGVTSMNPFLIKFFPSVYRKEQAAEKNQSNQYCKFDS. The helical transmembrane segment at 82 to 102 threads the bilayer; sequence PLLTMFTSSLYLAALVASFFA. Over 103 to 119 the chain is Cytoplasmic; it reads STVTRVAGRKWSMFGGG. A helical transmembrane segment spans residues 120-140; sequence VTFLVGAALNGAAKNVLMLIL. Topologically, residues 141 to 142 are extracellular; that stretch reads GR. The chain crosses the membrane as a helical span at residues 143 to 163; the sequence is VLLGVGVGFANQSVPLYLSEM. The Cytoplasmic segment spans residues 164–169; sequence APARLR. The chain crosses the membrane as a helical span at residues 170–190; that stretch reads GMLNIGFQLMITIGILCANLI. Residues 191–204 lie on the Extracellular side of the membrane; the sequence is NYGTAKIKGGWGWR. Residues 205–225 form a helical membrane-spanning segment; the sequence is VSLALAAVPAAIIAVGALFLP. Topologically, residues 226-291 are cytoplasmic; sequence DTPNSLIDRG…YRPQLTMAIA (66 aa). A helical transmembrane segment spans residues 292–312; the sequence is IPLFQQLTGINVIMFYAPVLF. The Extracellular portion of the chain corresponds to 313–323; the sequence is KTLGFADDASL. Residues 324–344 traverse the membrane as a helical segment; the sequence is MSAVITGLVNVFATFVSIVTV. Residues 345–359 are Cytoplasmic-facing; it reads DRLGRRKLFLQGGTQ. The helical transmembrane segment at 360 to 380 threads the bilayer; the sequence is MLACQIVVGSLIGAKFGFSGV. Topologically, residues 381 to 388 are extracellular; the sequence is ADIPKAYA. A helical membrane pass occupies residues 389-409; the sequence is AFVVLFICAYVAGFAWSWGPL. At 410-428 the chain is on the cytoplasmic side; that stretch reads GWLVPSEIFPLEIRSAGQS. The helical transmembrane segment at 429-449 threads the bilayer; sequence INVSVNMLFTFIIAQAFLPML. Over 450 to 453 the chain is Extracellular; the sequence is CRFK. The chain crosses the membrane as a helical span at residues 454–474; the sequence is FILFFFFGAWVVIMTLFVAFF. The Cytoplasmic portion of the chain corresponds to 475–530; the sequence is LPETKNVPIEEMVLVWKSHWYWGRFIRDEDVHVGADVEMPAAGNRNGKVDPAKLAN.

It belongs to the major facilitator superfamily. Sugar transporter (TC 2.A.1.1) family. In terms of tissue distribution, expressed in leaf blades, leaf sheaths, anthers, ovaries and embryos. Expressed at low levels in roots and shoots.

Its subcellular location is the cell membrane. In terms of biological role, mediates active uptake of hexoses by sugar:proton symport. Can transport glucose, fructose, mannose, galactose, xylose and ribose. This chain is Sugar transport protein MST6, found in Oryza sativa subsp. japonica (Rice).